A 204-amino-acid chain; its full sequence is MSAQDKLIKAQHLIDMNDIIREGNPTLRAVAKEVEFPLSDDDIILGEKMMQFLKHSQDPVMGEKLGLRAGVGLAAPQIDVSKRIIAVLVPNPEDSEGNPPKEAYSMEEVLYNPKIVSHSVQDAALADGEGCLSVDRVVEGYVVRHARVTVEYYDKHNEKHRIKLKGYNAIVVQHEIDHINGVLFYDRINAKKPFEAKEGMLILE.

Cys131 and His174 together coordinate Fe cation. The active site involves Glu175. Position 178 (His178) interacts with Fe cation.

This sequence belongs to the polypeptide deformylase family. The cofactor is Fe(2+).

It catalyses the reaction N-terminal N-formyl-L-methionyl-[peptide] + H2O = N-terminal L-methionyl-[peptide] + formate. Functionally, removes the formyl group from the N-terminal Met of newly synthesized proteins. Requires at least a dipeptide for an efficient rate of reaction. N-terminal L-methionine is a prerequisite for activity but the enzyme has broad specificity at other positions. The sequence is that of Peptide deformylase from Streptococcus equi subsp. zooepidemicus (strain H70).